The following is a 200-amino-acid chain: Interferon lambda-2 (200 aa).

The first 25 residues, 1–25, serve as a signal peptide directing secretion; sequence MKLDMTGDCTPVLVLMAAVLTVTGA.

Belongs to the lambda interferon family.

The protein resides in the secreted. Functionally, cytokine with antiviral, antitumour and immunomodulatory activities. Plays a critical role in the antiviral host defense, predominantly in the epithelial tissues. Acts as a ligand for the heterodimeric class II cytokine receptor composed of IL10RB and IFNLR1, and receptor engagement leads to the activation of the JAK/STAT signaling pathway resulting in the expression of IFN-stimulated genes (ISG), which mediate the antiviral state. Has a restricted receptor distribution and therefore restricted targets: is primarily active in epithelial cells and this cell type-selective action is because of the epithelial cell-specific expression of its receptor IFNLR1. Seems not to be essential for early virus-activated host defense in vaginal infection, but plays an important role in Toll-like receptor (TLR)-induced antiviral defense. Plays a significant role in the antiviral immune defense in the intestinal epithelium. Exerts an immunomodulatory effect by up-regulating MHC class I antigen expression. In Homo sapiens (Human), this protein is Interferon lambda-2 (IFNL2).